Reading from the N-terminus, the 401-residue chain is ADP-forming sulfoacetate-CoA ligase subunit SqwK (401 aa).

Positions 9 to 217 constitute an ATP-grasp domain; sequence KTVFSEHKIP…DNSVFRQPRF (209 aa). Residue 35–96 participates in ATP binding; that stretch reads KSVGFPSVVK…EEAVHIDKEI (62 aa). Mg(2+) contacts are provided by Glu-185 and Asn-187.

The protein belongs to the succinate/malate CoA ligase beta subunit family. As to quaternary structure, forms a complex with SqwL. Requires Mg(2+) as cofactor.

It catalyses the reaction sulfoacetate + ATP + CoA = sulfoacetyl-CoA + ADP + phosphate. In terms of biological role, part of a variant of the sulfo-TK pathway, a D-sulfoquinovose degradation pathway that produces sulfoacetate. Hydrolyzes sulfoacetyl-coenzyme A (sulfoacetyl-CoA) to produce sulfoacetate and CoA coupled with the phosphorylation of ADP to generate ATP. Cannot use succinate, acetate or 3-hydroxypropionate, and shows only residual activities with malonate and 3-sulfopropanoate. The polypeptide is ADP-forming sulfoacetate-CoA ligase subunit SqwK (Acholeplasma sp).